The primary structure comprises 600 residues: ATP-dependent RNA helicase DDX55 (600 aa).

Positions 9–37 match the Q motif motif; it reads WESLPVPLHPQVLGALRELGFPYMTPVQS. The Helicase ATP-binding domain maps to 40–223; that stretch reads IPLFMRNKDV…RAGLRNPVRV (184 aa). 53 to 60 lines the ATP pocket; it reads AVTGSGKT. The short motif at 171 to 174 is the DEAD box element; sequence DEAD. The 149-residue stretch at 254-402 folds into the Helicase C-terminal domain; sequence KFNQLVHFLR…EMKPQRNTAD (149 aa). The segment covering 500-513 has biased composition (basic and acidic residues); the sequence is EQQRREKTENEGRR. Residues 500–550 form a disordered region; sequence EQQRREKTENEGRRKFIKNKAWSKQKAKKEKKKKMNEKRKREEGSDIEDED. Residues 514–537 show a composition bias toward basic residues; that stretch reads KFIKNKAWSKQKAKKEKKKKMNEK. An important for nuclear localization region spans residues 533–562; that stretch reads KMNEKRKREEGSDIEDEDMEELLNDTRLLK. A phosphoserine mark is found at Ser-544 and Ser-594.

It belongs to the DEAD box helicase family. DDX55/SPB4 subfamily. In terms of assembly, interacts with 28S rRNA. Interacts with double-stranded RNA substrates in vitro; the interaction stimulates ATPase activity.

It localises to the nucleus. It is found in the nucleoplasm. It carries out the reaction ATP + H2O = ADP + phosphate + H(+). Functionally, probable ATP-binding RNA helicase. Has ATPase activity and is involved in the maturation of precursor large subunit rRNAs. In Homo sapiens (Human), this protein is ATP-dependent RNA helicase DDX55.